The primary structure comprises 102 residues: Noncompact myelin-associated protein (102 aa).

Residues 1-30 lie on the Extracellular side of the membrane; sequence MTTATPLGDTTFFSLNMTTRGEDFLYKSSG. A helical membrane pass occupies residues 31-51; the sequence is AIVAAVVVVVIIIFTVVLILL. Over 52-102 the chain is Cytoplasmic; sequence KMYNRKMRTRRELEPKGPKPTAPSAVGPNSNGSQHPATVTFSPVDVQVETR. Positions 60-102 are disordered; it reads TRRELEPKGPKPTAPSAVGPNSNGSQHPATVTFSPVDVQVETR. The segment covering 78 to 92 has biased composition (polar residues); sequence GPNSNGSQHPATVTF.

Post-translationally, glycosylated.

Its subcellular location is the cell membrane. Plays a role in myelin formation. The protein is Noncompact myelin-associated protein (NCMAP) of Homo sapiens (Human).